Reading from the N-terminus, the 659-residue chain is Pesticidal crystal protein Cry3Ba (659 aa).

The interval 1 to 41 (MIRMGGRKMNPNNRSEYDTIKVTPNSELPTNHNQYPLADNP) is disordered. Over residues 22 to 41 (VTPNSELPTNHNQYPLADNP) the composition is skewed to polar residues.

Belongs to the delta endotoxin family.

In terms of biological role, promotes colloidosmotic lysis by binding to the midgut epithelial cells of Coleoptera. This is Pesticidal crystal protein Cry3Ba (cry3Ba) from Bacillus thuringiensis subsp. tolworthi.